The following is an 88-amino-acid chain: Small ribosomal subunit protein uS17 (88 aa).

Belongs to the universal ribosomal protein uS17 family. In terms of assembly, part of the 30S ribosomal subunit.

Functionally, one of the primary rRNA binding proteins, it binds specifically to the 5'-end of 16S ribosomal RNA. In Nitratidesulfovibrio vulgaris (strain DSM 19637 / Miyazaki F) (Desulfovibrio vulgaris), this protein is Small ribosomal subunit protein uS17.